The primary structure comprises 571 residues: MNSLSLLLFCIFFVFSTFAKKVYYEAENGKLDGVTVYKSDLTGFSGTGYVGRFENPGNSVTVTVEVPQTGMYDLTIVYCANMGQKINSLTVNGQSAGDITFTENTKFEDLNVGAIYLNKGKNTIGLVSSWGWMWVDAFVINDAPNAAKDVTSKLNPTLINPKAIPAAKKLYDFLKTNYGKRILSGQVGAAGQAGDEGQEIQRIQKATGKLPAVWNMDFIFESNDCTWRPQNPDITEMAINWWKKYQGKGIMSAQWHWNIAGKTGDFAFYKKDTTFSIDNAVTEGTWEYEKIIKDIDRVAGHIKKLQAVNMPLIWRPLHENDGDWFWWGNNPKSCAKLWKILYERMVNYHGLNNLIWLWNGKNDANTPVDYIDIIGVDIYANDHGPQTTAYNTHFDFYGGKKMVVLSENGRIPDIQQCVDQNAWWGYFQTWNSEFILQDSYHTDAQLKEYFTHKTVMNMDELPSFNVNSYEYQSGNNNNNSSNNNNNNNSSECFSIPLGYPCCKGNTVVYTDNDGDWGVENNEWCGIGNSSSAVVCWSEALGYPCCVSSSDVYYTDNDGEWGVENGDWCGII.

The first 19 residues, 1 to 19 (MNSLSLLLFCIFFVFSTFA), serve as a signal peptide directing secretion. The region spanning 22-141 (VYYEAENGKL…WMWVDAFVIN (120 aa)) is the CBM6 domain. The GH26 domain occupies 165–459 (PAAKKLYDFL…FTHKTVMNMD (295 aa)). Trp286 contacts substrate. Glu319 (proton donor) is an active-site residue. Positions 324 and 379 each coordinate substrate. Glu407 serves as the catalytic Nucleophile. CBM10 domains are found at residues 491 to 527 (ECFS…CGIG) and 534 to 571 (VCWS…CGII).

This sequence belongs to the glycosyl hydrolase 26 family.

The catalysed reaction is Random hydrolysis of (1-&gt;4)-beta-D-mannosidic linkages in mannans, galactomannans and glucomannans.. The protein is Mannan endo-1,4-beta-mannosidase B (MANB) of Piromyces sp.